The sequence spans 436 residues: Ribulose bisphosphate carboxylase large chain (436 aa).

Residues N104 and T154 each coordinate substrate. Residue K156 is the Proton acceptor of the active site. K158 contributes to the substrate binding site. 3 residues coordinate Mg(2+): K182, D184, and E185. K182 carries the N6-carboxylysine modification. H275 acts as the Proton acceptor in catalysis. Residues R276, H308, and S360 each coordinate substrate.

Belongs to the RuBisCO large chain family. Type I subfamily. Heterohexadecamer of 8 large chains and 8 small chains. Mg(2+) serves as cofactor.

Its subcellular location is the plastid. It is found in the chloroplast. The catalysed reaction is 2 (2R)-3-phosphoglycerate + 2 H(+) = D-ribulose 1,5-bisphosphate + CO2 + H2O. It catalyses the reaction D-ribulose 1,5-bisphosphate + O2 = 2-phosphoglycolate + (2R)-3-phosphoglycerate + 2 H(+). Its function is as follows. RuBisCO catalyzes two reactions: the carboxylation of D-ribulose 1,5-bisphosphate, the primary event in carbon dioxide fixation, as well as the oxidative fragmentation of the pentose substrate in the photorespiration process. Both reactions occur simultaneously and in competition at the same active site. The polypeptide is Ribulose bisphosphate carboxylase large chain (Euglena stellata).